We begin with the raw amino-acid sequence, 208 residues long: Calaxin (208 aa).

EF-hand domains follow at residues 64 to 99, 100 to 135, and 145 to 180; these read TDDMIMDRVFRGFDKDNDSFISVTEWVEGLSVFLHG, TLEEKIKYCFGVYDLNGDGYISREEMFHMLKNSLLK, and GVKDLVEIALKKMDYDHDSKLSYTDFEKAVQEENLL. Residues D77, D79, D81, D113, N115, D117, Y119, E124, D158, D160, D162, K164, and D169 each contribute to the Ca(2+) site.

Component of the outer dynein arm-docking complex along with ODAD1, ODAD2, ODAD3 and ODAD4.

The protein resides in the cytoplasm. It localises to the cytoskeleton. The protein localises to the cilium axoneme. Its subcellular location is the cell projection. It is found in the cilium. The protein resides in the flagellum. Functionally, component of the outer dynein arm-docking complex (ODA-DC) that mediates outer dynein arms (ODA) binding onto the doublet microtubule. Seems to regulate the assembly of both ODAs and their axonemal docking complex onto ciliary microtubules. Regulates ciliary and flagellar motility and is required for cilia-driven determination of body laterality. The chain is Calaxin (clxn) from Xenopus laevis (African clawed frog).